A 1582-amino-acid polypeptide reads, in one-letter code: Adhesion G protein-coupled receptor B1 (1582 aa).

An N-terminal signal peptide occupies residues 1-33 (MRGQAAAPGPIWILAPLLLLLLLLGRWARAASG). The Extracellular portion of the chain corresponds to 34–948 (ADIGPGTEQC…ATMDKVTVPS (915 aa)). Residue N64 is glycosylated (N-linked (GlcNAc...) asparagine). The 55-residue stretch at 261–315 (AGGWKLWSLWGECTRDCGGGLQTRTRTCLPTLGVEGGGCEGVLEEGRLCNRKACG) folds into the TSP type-1 1 domain. 3 disulfide bridges follow: C273–C309, C277–C314, and C288–C299. A disordered region spans residues 313-335 (ACGPTGRSSSRSQSLRSTDARRR). Low complexity predominate over residues 319 to 329 (RSSSRSQSLRS). TSP type-1 domains follow at residues 354–407 (DPAA…AVCP), 409–462 (HGAW…ALCP), 467–520 (DGNW…QQCP), and 522–575 (DGKW…QRCP). Cystine bridges form between C366–C400, C370–C406, C381–C390, C421–C456, C425–C461, C436–C446, C479–C514, C483–C519, C494–C504, C534–C569, C538–C574, C549–C559, C581–C616, and C604–C634. N401 is a glycosylation site (N-linked (GlcNAc...) asparagine). The N-linked (GlcNAc...) asparagine glycan is linked to N607. Position 609 is a phosphothreonine (T609). 4 N-linked (GlcNAc...) asparagine glycosylation sites follow: N692, N844, N877, and N881. The region spanning 760-939 (RDAYQVTDNL…AILAQLSADA (180 aa)) is the GAIN-B domain. Intrachain disulfides connect C884-C921 and C909-C923. A GPS region spans residues 884–939 (CILWDETDGPSSSAPPQLGPWSWRGCRTVPLDALRTRCLCDRLSTFAILAQLSADA). Residues 927 to 943 (STFAILAQLSADATMDK) form an N-terminal stalk following vasculostatin-120 cleavage which is not required for signaling activity region. The chain crosses the membrane as a helical span at residues 949 to 969 (VTLIVGCGVSSLTLLMLVIIY). The Cytoplasmic portion of the chain corresponds to 970–980 (VSVWRYIRSER). Residues 981-1001 (SVILINFCLSIISSNALILIG) form a helical membrane-spanning segment. The Extracellular segment spans residues 1002-1008 (QTQTRNK). Residues 1009–1029 (VVCTLVAAFLHFFFLSSFCWV) form a helical membrane-spanning segment. Over 1030-1052 (LTEAWQSYMAVTGRLRSRLVRKR) the chain is Cytoplasmic. Residues 1053 to 1073 (FLCLGWGLPALVVAISVGFTK) form a helical membrane-spanning segment. The Extracellular segment spans residues 1074-1093 (AKGYSTMNYCWLSLEGGLLY). Residues 1094–1114 (AFVGPAAAVVLVNMVIGILVF) form a helical membrane-spanning segment. Residues 1115–1136 (NKLVSKDGITDKKLKERAGASL) lie on the Cytoplasmic side of the membrane. A helical membrane pass occupies residues 1137–1157 (WSSCVVLPLLALTWMSAVLAV). Residues 1158–1166 (TDRRSALFQ) are Extracellular-facing. Residues 1167–1187 (ILFAVFDSLEGFVIVMVHCIL) form a helical membrane-spanning segment. At 1188 to 1582 (RREVQDAVKC…QDIIDLQTEV (395 aa)) the chain is on the cytoplasmic side. The involved in interaction with MAGI1 stretch occupies residues 1363–1582 (YSINIDQMPQ…QDIIDLQTEV (220 aa)). A disordered region spans residues 1382–1549 (PDASFPTRSP…AWVKKELEPL (168 aa)). The span at 1389-1435 (RSPPAREPPGGAPPEVPPVQPPPPPPPPPPPPQQPIPPPPTLEPAPP) shows a compositional bias: pro residues. Residues 1441–1455 (GEPAAHPGPSSGAGA) are compositionally biased toward low complexity. The residue at position 1467 (S1467) is a Phosphoserine. Composition is skewed to basic and acidic residues over residues 1468–1484 (LERR…EKIM) and 1491–1520 (QDMF…KPEK). The interval 1579–1582 (QTEV) is indispensable for interaction with MAGI1.

The protein belongs to the G-protein coupled receptor 2 family. LN-TM7 subfamily. As to quaternary structure, interacts with ELMO1 and DOCK1. When bound to ELMO1 and DOCK1, acts as a module to promote apoptotic cell engulfment. Interacts with MDM2; the interaction results in inhibition of MDM2-mediated ubiquitination and degradation of DLG4/PSD95. Interacts with PARD3 and TIAM1; the interaction is required for correct dendritic localization of PARD3 and TIAM1 and for dendritic spine formation. Interacts with MAGI1, MAGI3 and BAIAP2. Interacts with PHYHIP. Interacts with DLG4 (via PDZ domain). Vasculostatin-120: Interacts with CD36. Vasculostatin-120: Interacts with ARRB2. Interacts with BAIAP3; this interaction is direct. In terms of processing, proteolytically cleaved to produce vasculostatin-40 and vasculostatin-120. Vasculostatin-40 is the major form and is produced through proteolytic cleavage by MMP14 between residues 321 and 329 with cleavage likely to be between Ser-326 and Leu-327. Post-translationally, ubiquitinated. As to expression, in brain, widespread expression in all neuropil-rich zones including spinal cord gray matter, cerebellar molecular layer, cerebral cortex, thalamic nuclei and basal ganglia with no expression in white matter (at protein level). In the cerebellar molecular layer, highly expressed in interneuron processes whereas Purkinje cells and their dendrites show weaker expression (at protein level). In the olfactory bulb, highly expressed in glomeruli (at protein level). In the retina, highly concentrated in the outer and inner plexiform layers (at protein level). Expressed in brain. Enriched in hippocampus and cortex. Also detected in other tissues including bone marrow and spleen.

The protein resides in the cell membrane. It is found in the cell projection. The protein localises to the phagocytic cup. Its subcellular location is the cell junction. It localises to the focal adhesion. The protein resides in the dendritic spine. It is found in the postsynaptic density. The protein localises to the secreted. In terms of biological role, phosphatidylserine receptor which enhances the engulfment of apoptotic cells. Also mediates the binding and engulfment of Gram-negative bacteria. Stimulates production of reactive oxygen species by macrophages in response to Gram-negative bacteria, resulting in enhanced microbicidal macrophage activity. In the gastric mucosa, required for recognition and engulfment of apoptotic gastric epithelial cells. Promotes myoblast fusion. Activates the Rho pathway in a G-protein-dependent manner. Inhibits MDM2-mediated ubiquitination and degradation of DLG4/PSD95, promoting DLG4 stability and regulating synaptic plasticity. Required for the formation of dendritic spines by ensuring the correct localization of PARD3 and TIAM1. Potent inhibitor of angiogenesis in brain and may play a significant role as a mediator of the p53/TP53 signal in suppression of glioblastoma. Inhibits angiogenesis in a CD36-dependent manner. Its function is as follows. Inhibits angiogenesis. The polypeptide is Adhesion G protein-coupled receptor B1 (Mus musculus (Mouse)).